We begin with the raw amino-acid sequence, 155 residues long: MGQDNIKVIARNKKARHDFFIEETYESGIILRGTEIKSVREGRVNLKDSFALVENGEVFLYNMHISPYKQGNRYNHDPGRKRKLLLHKSEIRKLIGKTKQRGYSLVPLSIYLKNNLAKIELALAKGKKKYDKRQEIAKKTAEREIRRAFKERQRY.

This sequence belongs to the SmpB family.

The protein localises to the cytoplasm. Its function is as follows. Required for rescue of stalled ribosomes mediated by trans-translation. Binds to transfer-messenger RNA (tmRNA), required for stable association of tmRNA with ribosomes. tmRNA and SmpB together mimic tRNA shape, replacing the anticodon stem-loop with SmpB. tmRNA is encoded by the ssrA gene; the 2 termini fold to resemble tRNA(Ala) and it encodes a 'tag peptide', a short internal open reading frame. During trans-translation Ala-aminoacylated tmRNA acts like a tRNA, entering the A-site of stalled ribosomes, displacing the stalled mRNA. The ribosome then switches to translate the ORF on the tmRNA; the nascent peptide is terminated with the 'tag peptide' encoded by the tmRNA and targeted for degradation. The ribosome is freed to recommence translation, which seems to be the essential function of trans-translation. In Halothermothrix orenii (strain H 168 / OCM 544 / DSM 9562), this protein is SsrA-binding protein.